Here is a 209-residue protein sequence, read N- to C-terminus: Kynurenine formamidase (209 aa).

Trp-18 serves as a coordination point for substrate. Positions 48, 52, and 54 each coordinate Zn(2+). The Proton donor/acceptor role is filled by His-58. Zn(2+) is bound by residues His-160 and Glu-172.

It belongs to the Cyclase 1 superfamily. KynB family. Homodimer. Zn(2+) serves as cofactor.

The catalysed reaction is N-formyl-L-kynurenine + H2O = L-kynurenine + formate + H(+). It participates in amino-acid degradation; L-tryptophan degradation via kynurenine pathway; L-kynurenine from L-tryptophan: step 2/2. In terms of biological role, catalyzes the hydrolysis of N-formyl-L-kynurenine to L-kynurenine, the second step in the kynurenine pathway of tryptophan degradation. This is Kynurenine formamidase from Maricaulis maris (strain MCS10) (Caulobacter maris).